Consider the following 344-residue polypeptide: Anthranilate phosphoribosyltransferase (344 aa).

Residues G80, 83–84 (GD), T88, 90–93 (NVST), 108–116 (KHGNRSVSS), and S120 contribute to the 5-phospho-alpha-D-ribose 1-diphosphate site. Anthranilate is bound at residue G80. Residue S92 participates in Mg(2+) binding. N111 provides a ligand contact to anthranilate. R166 lines the anthranilate pocket. Residues D225 and E226 each contribute to the Mg(2+) site.

Belongs to the anthranilate phosphoribosyltransferase family. Homodimer. Requires Mg(2+) as cofactor.

It carries out the reaction N-(5-phospho-beta-D-ribosyl)anthranilate + diphosphate = 5-phospho-alpha-D-ribose 1-diphosphate + anthranilate. It functions in the pathway amino-acid biosynthesis; L-tryptophan biosynthesis; L-tryptophan from chorismate: step 2/5. Catalyzes the transfer of the phosphoribosyl group of 5-phosphorylribose-1-pyrophosphate (PRPP) to anthranilate to yield N-(5'-phosphoribosyl)-anthranilate (PRA). In Legionella pneumophila (strain Lens), this protein is Anthranilate phosphoribosyltransferase.